Here is a 306-residue protein sequence, read N- to C-terminus: Glutaminase (306 aa).

Residues S64, N115, E159, N166, Y190, Y242, and V260 each coordinate substrate.

The protein belongs to the glutaminase family. In terms of assembly, homotetramer.

It carries out the reaction L-glutamine + H2O = L-glutamate + NH4(+). The protein is Glutaminase of Aeromonas hydrophila subsp. hydrophila (strain ATCC 7966 / DSM 30187 / BCRC 13018 / CCUG 14551 / JCM 1027 / KCTC 2358 / NCIMB 9240 / NCTC 8049).